Reading from the N-terminus, the 177-residue chain is Transmembrane protein 275 (177 aa).

A disordered region spans residues 1–20 (MPQAKKSTETLAPAPPGRSR). Helical transmembrane passes span 36–56 (GLCV…AAFL) and 63–83 (LVVG…CCVC). The disordered stretch occupies residues 113 to 177 (ESSERTAQDT…LNFPRDPAAS (65 aa)). The segment covering 128 to 161 (SPAASAASSGRSSPGPGLFALDPPAPATAAPYLP) has biased composition (low complexity).

The protein localises to the membrane. The chain is Transmembrane protein 275 from Mus musculus (Mouse).